Reading from the N-terminus, the 124-residue chain is Large ribosomal subunit protein bL12 (124 aa).

It belongs to the bacterial ribosomal protein bL12 family. As to quaternary structure, homodimer. Part of the ribosomal stalk of the 50S ribosomal subunit. Forms a multimeric L10(L12)X complex, where L10 forms an elongated spine to which 2 to 4 L12 dimers bind in a sequential fashion. Binds GTP-bound translation factors.

Functionally, forms part of the ribosomal stalk which helps the ribosome interact with GTP-bound translation factors. Is thus essential for accurate translation. The sequence is that of Large ribosomal subunit protein bL12 from Azobacteroides pseudotrichonymphae genomovar. CFP2.